We begin with the raw amino-acid sequence, 813 residues long: Calpain-7 (813 aa).

Methionine 1 bears the N-acetylmethionine mark. Position 95 is a phosphothreonine (threonine 95). Residues 232-540 (RERFAYPMPF…YDVVYLSWNP (309 aa)) enclose the Calpain catalytic domain. Catalysis depends on residues cysteine 290, histidine 458, and asparagine 478. The domain III stretch occupies residues 541–701 (ALFKESTCIH…INGKWSGQSA (161 aa)). The interval 702–813 (GGCGNFQETH…TVPIKTTQLQ (112 aa)) is domain N.

This sequence belongs to the peptidase C2 family. In terms of tissue distribution, ubiquitous.

It is found in the nucleus. Calcium-regulated non-lysosomal thiol-protease. This is Calpain-7 (Capn7) from Mus musculus (Mouse).